The following is a 540-amino-acid chain: Probable protein kinase UbiB (540 aa).

The chain crosses the membrane as a helical span at residues 24–44 (LLFDQPLLPWWLASLRLLMPW). Residues 126–494 (RFDVEPLASA…RRRQGDRWAL (369 aa)) form the Protein kinase domain. Residues 132 to 140 (LASASVAQV) and Lys154 each bind ATP. Asp289 acts as the Proton acceptor in catalysis. Transmembrane regions (helical) follow at residues 496 to 516 (LLGA…AETA) and 518 to 538 (LAAP…YLIV).

This sequence belongs to the ABC1 family. UbiB subfamily.

The protein resides in the cell inner membrane. It participates in cofactor biosynthesis; ubiquinone biosynthesis [regulation]. In terms of biological role, is probably a protein kinase regulator of UbiI activity which is involved in aerobic coenzyme Q (ubiquinone) biosynthesis. This Pseudomonas putida (strain ATCC 700007 / DSM 6899 / JCM 31910 / BCRC 17059 / LMG 24140 / F1) protein is Probable protein kinase UbiB.